The chain runs to 999 residues: Probable hemoglobin and hemoglobin-haptoglobin-binding protein 4 (999 aa).

The first 24 residues, methionine 1–alanine 24, serve as a signal peptide directing secretion. Residues glutamate 25 to asparagine 52 form a disordered region. 6 repeat units span residues proline 26 to glutamine 29, proline 30 to glutamine 33, proline 34 to glutamine 37, proline 38 to glutamine 41, proline 42 to glutamine 45, and proline 46 to glutamine 49. The interval proline 26–glutamine 49 is 6 X 4 AA tandem repeats of P-T-N-Q. Low complexity predominate over residues proline 26–asparagine 50. A TonB box motif is present at residues glutamate 58–serine 65. A TBDR plug domain is found at asparagine 68–lysine 195. The 797-residue stretch at glutamate 203–phenylalanine 999 folds into the TBDR beta-barrel domain. Positions asparagine 982–phenylalanine 999 match the TonB C-terminal box motif.

Belongs to the TonB-dependent receptor family. Hemoglobin/haptoglobin binding protein subfamily.

Its subcellular location is the cell outer membrane. Acts as a receptor for hemoglobin or the hemoglobin/haptoglobin complex of the human host and is required for heme uptake. The protein is Probable hemoglobin and hemoglobin-haptoglobin-binding protein 4 of Haemophilus influenzae (strain ATCC 51907 / DSM 11121 / KW20 / Rd).